The primary structure comprises 287 residues: 4-diphosphocytidyl-2-C-methyl-D-erythritol kinase (287 aa).

Lys-11 is an active-site residue. 93-103 (PFGAGLGGGSS) lines the ATP pocket. Asp-135 is an active-site residue.

Belongs to the GHMP kinase family. IspE subfamily.

The enzyme catalyses 4-CDP-2-C-methyl-D-erythritol + ATP = 4-CDP-2-C-methyl-D-erythritol 2-phosphate + ADP + H(+). It functions in the pathway isoprenoid biosynthesis; isopentenyl diphosphate biosynthesis via DXP pathway; isopentenyl diphosphate from 1-deoxy-D-xylulose 5-phosphate: step 3/6. Functionally, catalyzes the phosphorylation of the position 2 hydroxy group of 4-diphosphocytidyl-2C-methyl-D-erythritol. The protein is 4-diphosphocytidyl-2-C-methyl-D-erythritol kinase of Pelodictyon phaeoclathratiforme (strain DSM 5477 / BU-1).